The primary structure comprises 453 residues: Allantoinase (453 aa).

Zn(2+)-binding residues include histidine 59, histidine 61, lysine 146, histidine 186, histidine 242, and aspartate 315. Lysine 146 bears the N6-carboxylysine mark.

It belongs to the metallo-dependent hydrolases superfamily. Allantoinase family. Homotetramer. The cofactor is Zn(2+). Post-translationally, carboxylation allows a single lysine to coordinate two zinc ions.

The enzyme catalyses (S)-allantoin + H2O = allantoate + H(+). The protein operates within nitrogen metabolism; (S)-allantoin degradation; allantoate from (S)-allantoin: step 1/1. Functionally, catalyzes the conversion of allantoin (5-ureidohydantoin) to allantoic acid by hydrolytic cleavage of the five-member hydantoin ring. The protein is Allantoinase of Escherichia coli (strain 55989 / EAEC).